The sequence spans 608 residues: Probable Ufm1-specific protease 2 (608 aa).

Residues Cys441, Asp565, and His567 contribute to the active site.

Belongs to the peptidase C78 family.

Its function is as follows. Thiol protease which recognizes and hydrolyzes the peptide bond at the C-terminal Gly of UFM1, a ubiquitin-like modifier protein bound to a number of target proteins. Does not hydrolyze SUMO1 or ISG15 ubiquitin-like proteins. This chain is Probable Ufm1-specific protease 2, found in Drosophila pseudoobscura pseudoobscura (Fruit fly).